We begin with the raw amino-acid sequence, 321 residues long: uncharacterized protein (321 aa).

A disordered region spans residues asparagine 280 to glutamate 306. Low complexity predominate over residues asparagine 286–glutamate 306.

This is an uncharacterized protein from Dictyostelium discoideum (Social amoeba).